Reading from the N-terminus, the 214-residue chain is Leucyl/phenylalanyl-tRNA--protein transferase (214 aa).

This sequence belongs to the L/F-transferase family.

Its subcellular location is the cytoplasm. It carries out the reaction N-terminal L-lysyl-[protein] + L-leucyl-tRNA(Leu) = N-terminal L-leucyl-L-lysyl-[protein] + tRNA(Leu) + H(+). It catalyses the reaction N-terminal L-arginyl-[protein] + L-leucyl-tRNA(Leu) = N-terminal L-leucyl-L-arginyl-[protein] + tRNA(Leu) + H(+). The catalysed reaction is L-phenylalanyl-tRNA(Phe) + an N-terminal L-alpha-aminoacyl-[protein] = an N-terminal L-phenylalanyl-L-alpha-aminoacyl-[protein] + tRNA(Phe). Functionally, functions in the N-end rule pathway of protein degradation where it conjugates Leu, Phe and, less efficiently, Met from aminoacyl-tRNAs to the N-termini of proteins containing an N-terminal arginine or lysine. The protein is Leucyl/phenylalanyl-tRNA--protein transferase of Cereibacter sphaeroides (strain ATCC 17029 / ATH 2.4.9) (Rhodobacter sphaeroides).